The chain runs to 445 residues: MRLSRYFLPVLKENPSEAQIVSHRYMLRAGMIKQQAAGIYSWLPLGFKVLKRIEQIVHEEQIRAGHIPLLMPTLQPADLWRESGRYDDYGEEMLRITDRHKRDMLYGPTNEEMITDIFRSHVSSYKDLPLTLYHIQWKFRDEIRPRFGVMRGREFLMKDGYNFDLDYESAIHAYNRHMVSYLRTYERMGLQAIPMRAASGPIGGDNTHEFLVLASTGESEVFYDAAITDLKFGDRVVNYDDRAECEAIVKEWTAPYARTDETHDEAVFGQIPEERRRSSRGIEVGQIFYFGTKYSEPMGANVVTADGSRVPVHMGSHGIGVSRLLGAIIEASHDDKGIIWPEGVTPFHAGIVNLKQGDSSTDLACEALYRDLSARGLEPLYDDRDERAGAKFATMDLIGLPWRITVGPRGISAGKVELTNRRTGESEEMSSGAAVDRLAQIYAGI.

This sequence belongs to the class-II aminoacyl-tRNA synthetase family. ProS type 2 subfamily. In terms of assembly, homodimer.

The protein localises to the cytoplasm. The catalysed reaction is tRNA(Pro) + L-proline + ATP = L-prolyl-tRNA(Pro) + AMP + diphosphate. Its function is as follows. Catalyzes the attachment of proline to tRNA(Pro) in a two-step reaction: proline is first activated by ATP to form Pro-AMP and then transferred to the acceptor end of tRNA(Pro). This Cereibacter sphaeroides (strain ATCC 17023 / DSM 158 / JCM 6121 / CCUG 31486 / LMG 2827 / NBRC 12203 / NCIMB 8253 / ATH 2.4.1.) (Rhodobacter sphaeroides) protein is Proline--tRNA ligase.